The following is a 117-amino-acid chain: Large ribosomal subunit protein uL22 (117 aa).

This sequence belongs to the universal ribosomal protein uL22 family. Part of the 50S ribosomal subunit.

In terms of biological role, this protein binds specifically to 23S rRNA; its binding is stimulated by other ribosomal proteins, e.g. L4, L17, and L20. It is important during the early stages of 50S assembly. It makes multiple contacts with different domains of the 23S rRNA in the assembled 50S subunit and ribosome. Functionally, the globular domain of the protein is located near the polypeptide exit tunnel on the outside of the subunit, while an extended beta-hairpin is found that lines the wall of the exit tunnel in the center of the 70S ribosome. The protein is Large ribosomal subunit protein uL22 of Leptospira biflexa serovar Patoc (strain Patoc 1 / ATCC 23582 / Paris).